The primary structure comprises 931 residues: Elicitor of plant defense protein 1 (931 aa).

The disordered stretch occupies residues 13 to 32; the sequence is NYNSVIPPPEPLNTDPDMHP. Residues 19–277 enclose the uDENN domain; the sequence is PPPEPLNTDP…NLCTEAFNPL (259 aa). One can recognise a cDENN domain in the interval 301 to 433; that stretch reads EIPGSRSIDL…ARRKLMSLLQ (133 aa). The region spanning 435 to 799 is the dDENN domain; the sequence is AAPHKLRYGV…DREMQPANNA (365 aa). Disordered stretches follow at residues 478 to 552 and 566 to 586; these read LGKW…SRSD and SGHF…DKHP. The segment covering 521–537 has biased composition (polar residues); sequence TSKSGKTSPQSSVSPVS. Residues 566-575 show a composition bias toward basic and acidic residues; it reads SGHFGEEKMR. The Phorbol-ester/DAG-type zinc-finger motif lies at 666 to 714; the sequence is GHCFNWIPKDNTSICNICNDHAEGDGIYKCTGCKIFSHGRCLGHASLVC.

It belongs to the EPD1 elicitor family.

The protein localises to the secreted. It localises to the host cell. In terms of biological role, acts as an elicitor that triggers cell death and defense responses in the host plants. The chain is Elicitor of plant defense protein 1 from Fusarium odoratissimum (strain NRRL 54006).